We begin with the raw amino-acid sequence, 312 residues long: Non-structural protein 12A (312 aa).

Over residues 1-23 (MFKSGSGSLKRSGSISSVKSFSG) the composition is skewed to low complexity. 3 disordered regions span residues 1–37 (MFKS…RGSV), 62–97 (FVPE…YNQN), and 112–159 (SSKG…SHGT). A compositionally biased stretch (basic and acidic residues) spans 63–73 (VPEKTKSEGNL). Residues 74-97 (KNKSSVITGNFGSSGPTNAHYNQN) show a composition bias toward polar residues. Residues 122–134 (DARHTATDSRLSQ) are compositionally biased toward basic and acidic residues. Over residues 135-154 (EVKQPFSEENASGNDLNTGR) the composition is skewed to polar residues.

Belongs to the phytoreovirus non-structural protein Pns12A family.

It localises to the host cytoplasm. In terms of biological role, constituent of viral factories. In Rice dwarf virus (isolate O) (RDV), this protein is Non-structural protein 12A.